The sequence spans 1049 residues: MTIKEMPQPKTFGELKNLPLLNTDKPVQALMKIADELGEIFKFEAPGRVTRYLSSQRLIKEACDESRFDKNLSQALKFVRDFAGDGLFTSWTHEKNWKKAHNILLPSFSQQAMKGYHAMMVDIAVQLVQKWERLNADEHIEVPEDMTRLTLDTIGLCGFNYRFNSFYRDQPHPFITSMVRALDEAMNKLQRANPDDPAYDENKRQFQEDIKVMNDLVDKIIADRKASGEQSDDLLTHMLNGKDPETGEPLDDENIRYQIITFLIAGHETTSGLLSFALYFLVKNPHVLQKAAEEAARVLVDPVPSYKQVKQLKYVGMVLNEALRLWPTAPAFSLYAKEDTVLGGEYPLEKGDELMVLIPQLHRDKTIWGDDVEEFRPERFENPSAIPQHAFKPFGNGQRACIGQQFALHEATLVLGMMLKHFDFEDHTNYELDIKETLTLKPEGFVVKAKSKKIPLGGIPSPSTEQSAKKVRKKAENAHNTPLLVLYGSNMGTAEGTARDLADIAMSKGFAPQVATLDSHAGNLPREGAVLIVTASYNGHPPDNAKQFVDWLDQASADEVKGVRYSVFGCGDKNWATTYQKVPAFIDETLAAKGAENIADRGEADASDDFEGTYEEWREHMWSDVAAYFNLDIENSEDNKSTLSLQFVDSAADMPLAKMHGAFSTNVVASKELQQPGSARSTRHLEIELPKEASYQEGDHLGVIPRNYEGIVNRVTARFGLDASQQIRLEAEEEKLAHLPLAKTVSVEELLQYVELQDPVTRTQLRAMAAKTVCPPHKVELEALLEKQAYKEQVLAKRLTMLELLEKYPACEMKFSEFIALLPSIRPRYYSISSSPRVDEKQASITVSVVSGEAWSGYGEYKGIASNYLAELQEGDTITCFISTPQSEFTLPKDPETPLIMVGPGTGVAPFRGFVQARKQLKEQGQSLGEAHLYFGCRSPHEDYLYQEELENAQSEGIITLHTAFSRMPNQPKTYVQHVMEQDGKKLIELLDQGAHFYICGDGSQMAPAVEATLMKSYADVHQVSEADARLWLQQLEEKGRYAKDVWAG.

Positions 2–472 (TIKEMPQPKT…STEQSAKKVR (471 aa)) are cytochrome P450. Y52 contributes to the (9Z)-hexadecenoate binding site. C401 is a heme binding site. The interval 473-1049 (KKAENAHNTP…GRYAKDVWAG (577 aa)) is NADPH--P450 reductase. A Flavodoxin-like domain is found at 483–622 (LLVLYGSNMG…TYEEWREHMW (140 aa)). FMN-binding positions include 489-494 (SNMGTA), 536-539 (SYNG), 570-572 (CGD), and 578-580 (TYQ). The FAD-binding FR-type domain occupies 660-892 (HGAFSTNVVA…STPQSEFTLP (233 aa)).

The protein in the N-terminal section; belongs to the cytochrome P450 family. FAD is required as a cofactor. Requires FMN as cofactor. Heme serves as cofactor.

The protein localises to the cytoplasm. It carries out the reaction 2 oxidized [cytochrome P450] + NADPH = 2 reduced [cytochrome P450] + NADP(+) + H(+). The catalysed reaction is an organic molecule + reduced [NADPH--hemoprotein reductase] + O2 = an alcohol + oxidized [NADPH--hemoprotein reductase] + H2O + H(+). Its activity is regulated as follows. Inhibited by N-(12-imidazolyl-dodecanoyl)-L-leucine. Its function is as follows. Functions as a fatty acid monooxygenase. Catalyzes hydroxylation of fatty acids at omega-1, omega-2 and omega-3 positions. Shows activity toward medium and long-chain fatty acids, with optimum chain lengths of 12, 14 and 16 carbons (lauric, myristic, and palmitic acids). Able to metabolize some of these primary metabolites to secondary and tertiary products. Marginal activity towards short chain lengths of 8-10 carbons. Hydroxylates highly branched fatty acids, which play an essential role in membrane fluidity regulation. Also displays a NADPH-dependent reductase activity in the C-terminal domain, which allows electron transfer from NADPH to the heme iron of the cytochrome P450 N-terminal domain. Involved in inactivation of quorum sensing signals of other competing bacteria by oxidazing efficiently acyl homoserine lactones (AHLs), molecules involved in quorum sensing signaling pathways, and their lactonolysis products acyl homoserines (AHs). This is Bifunctional cytochrome P450/NADPH--P450 reductase from Priestia megaterium (strain ATCC 14581 / DSM 32 / CCUG 1817 / JCM 2506 / NBRC 15308 / NCIMB 9376 / NCTC 10342 / NRRL B-14308 / VKM B-512 / Ford 19) (Bacillus megaterium).